Reading from the N-terminus, the 282-residue chain is Undecaprenyl-diphosphatase (282 aa).

8 consecutive transmembrane segments (helical) span residues 2 to 22 (FDFI…FLPV), 47 to 67 (FTAV…IQLY), 90 to 110 (WIKV…LNNF), 115 to 135 (LLNP…FIVI), 152 to 172 (ITFK…VPGT), 190 to 210 (FVAA…VTIL), 225 to 245 (AQLF…LFAI), and 259 to 279 (IFGW…IAGL).

The protein belongs to the UppP family.

Its subcellular location is the cell membrane. The enzyme catalyses di-trans,octa-cis-undecaprenyl diphosphate + H2O = di-trans,octa-cis-undecaprenyl phosphate + phosphate + H(+). Functionally, catalyzes the dephosphorylation of undecaprenyl diphosphate (UPP). Confers resistance to bacitracin. This chain is Undecaprenyl-diphosphatase, found in Leuconostoc citreum (strain KM20).